Consider the following 619-residue polypeptide: Frizzled and smoothened-like protein L (619 aa).

A signal peptide spans 1 to 24 (MITNKSKYYFFLILIFINFYLINC). 7 N-linked (GlcNAc...) asparagine glycosylation sites follow: N4, N63, N112, N143, N159, N184, and N203. Residues 25–245 (QEEYPIDQTG…KQWDRLYDLS (221 aa)) lie on the Extracellular side of the membrane. Positions 31-169 (DQTGKCEPYI…YSIYDLSLVN (139 aa)) constitute an FZ domain. Cystine bridges form between C36–C106 and C48–C99. Residues 246 to 266 (NSLSVLSCVGTLFLLFTFNIL) form a helical membrane-spanning segment. Topologically, residues 267–278 (NKKINRFDRMNS) are cytoplasmic. A helical transmembrane segment spans residues 279–299 (LFNGSVFMMSLSGVIILFAGG). The Extracellular segment spans residues 300–321 (PRALIKDGGARISVWQDPLCSA). A helical transmembrane segment spans residues 322–342 (TGFIFQLFSIAAILFWVVMSF). The Cytoplasmic portion of the chain corresponds to 343 to 358 (ELWYKIKFMTKKLDLK). A helical membrane pass occupies residues 359–379 (KYYIPFIIIVSLVFSIIPLAT). The Extracellular portion of the chain corresponds to 380-402 (KNYRMIRGNMHCWVHTTKLQNSL). A helical transmembrane segment spans residues 403-423 (FWIPLGIAITIGTIFIGLVMF). Residues 424–444 (EIHRIVSANSKGGVLKLEIKS) are Cytoplasmic-facing. A helical membrane pass occupies residues 445 to 465 (ILNVALIYLTFIYLFAFNFYM). The Extracellular segment spans residues 466–497 (NGQEGVVYGQIESFYQCTLENDASECTIQGPS). Residues 498 to 518 (IGSLGFFIFCIRIYGVYCFIL) traverse the membrane as a helical segment. At 519–619 (QGLNYRAYNI…TLKDIEVSKS (101 aa)) the chain is on the cytoplasmic side. The tract at residues 581-605 (LNIDSAFSKNNESDDEDDYDPYKKS) is disordered.

The protein belongs to the G-protein coupled receptor Fz/Smo family.

The protein resides in the membrane. The protein is Frizzled and smoothened-like protein L (fslL) of Dictyostelium discoideum (Social amoeba).